The following is a 162-amino-acid chain: 2-C-methyl-D-erythritol 2,4-cyclodiphosphate synthase (162 aa).

A divalent metal cation-binding residues include D10 and H12. Residues 10 to 12 (DVH) and 36 to 37 (HS) contribute to the 4-CDP-2-C-methyl-D-erythritol 2-phosphate site. H44 provides a ligand contact to a divalent metal cation. 4-CDP-2-C-methyl-D-erythritol 2-phosphate-binding positions include 58 to 60 (DIG), 63 to 67 (FPDTD), and R144.

It belongs to the IspF family. Homotrimer. It depends on a divalent metal cation as a cofactor.

It carries out the reaction 4-CDP-2-C-methyl-D-erythritol 2-phosphate = 2-C-methyl-D-erythritol 2,4-cyclic diphosphate + CMP. The protein operates within isoprenoid biosynthesis; isopentenyl diphosphate biosynthesis via DXP pathway; isopentenyl diphosphate from 1-deoxy-D-xylulose 5-phosphate: step 4/6. Involved in the biosynthesis of isopentenyl diphosphate (IPP) and dimethylallyl diphosphate (DMAPP), two major building blocks of isoprenoid compounds. Catalyzes the conversion of 4-diphosphocytidyl-2-C-methyl-D-erythritol 2-phosphate (CDP-ME2P) to 2-C-methyl-D-erythritol 2,4-cyclodiphosphate (ME-CPP) with a corresponding release of cytidine 5-monophosphate (CMP). The chain is 2-C-methyl-D-erythritol 2,4-cyclodiphosphate synthase from Laribacter hongkongensis (strain HLHK9).